We begin with the raw amino-acid sequence, 269 residues long: Hemin import ATP-binding protein HmuV (269 aa).

In terms of domain architecture, ABC transporter spans 2–242 (LEVIHTGLNI…AMVEACFDLP (241 aa)). 34–41 (GPNGAGKS) is a binding site for ATP.

This sequence belongs to the ABC transporter superfamily. Heme (hemin) importer (TC 3.A.1.14.5) family. As to quaternary structure, the complex is composed of two ATP-binding proteins (HmuV), two transmembrane proteins (HmuU) and a solute-binding protein (HmuT).

It is found in the cell inner membrane. Functionally, part of the ABC transporter complex HmuTUV involved in hemin import. Responsible for energy coupling to the transport system. The sequence is that of Hemin import ATP-binding protein HmuV from Methylobacillus flagellatus (strain ATCC 51484 / DSM 6875 / VKM B-1610 / KT).